The chain runs to 277 residues: Undecaprenyl-diphosphatase (277 aa).

Transmembrane regions (helical) follow at residues 1–21 (MTWI…FLPI), 41–61 (GAAF…IYFW), 90–110 (WLII…EDWI), 114–134 (FRSL…LALA), 191–211 (AFLL…YTSL), 224–244 (ETLV…AWLM), and 255–275 (FVWY…AGVI).

It belongs to the UppP family.

It localises to the cell membrane. The catalysed reaction is di-trans,octa-cis-undecaprenyl diphosphate + H2O = di-trans,octa-cis-undecaprenyl phosphate + phosphate + H(+). Functionally, catalyzes the dephosphorylation of undecaprenyl diphosphate (UPP). Confers resistance to bacitracin. The protein is Undecaprenyl-diphosphatase of Micrococcus luteus (strain ATCC 4698 / DSM 20030 / JCM 1464 / CCM 169 / CCUG 5858 / IAM 1056 / NBRC 3333 / NCIMB 9278 / NCTC 2665 / VKM Ac-2230) (Micrococcus lysodeikticus).